A 292-amino-acid chain; its full sequence is 4-hydroxy-tetrahydrodipicolinate synthase (292 aa).

Residue T44 participates in pyruvate binding. The active-site Proton donor/acceptor is the Y132. K160 (schiff-base intermediate with substrate) is an active-site residue. I202 contacts pyruvate.

The protein belongs to the DapA family. Homotetramer; dimer of dimers.

The protein resides in the cytoplasm. It carries out the reaction L-aspartate 4-semialdehyde + pyruvate = (2S,4S)-4-hydroxy-2,3,4,5-tetrahydrodipicolinate + H2O + H(+). Its pathway is amino-acid biosynthesis; L-lysine biosynthesis via DAP pathway; (S)-tetrahydrodipicolinate from L-aspartate: step 3/4. Its function is as follows. Catalyzes the condensation of (S)-aspartate-beta-semialdehyde [(S)-ASA] and pyruvate to 4-hydroxy-tetrahydrodipicolinate (HTPA). The polypeptide is 4-hydroxy-tetrahydrodipicolinate synthase (Magnetococcus marinus (strain ATCC BAA-1437 / JCM 17883 / MC-1)).